Reading from the N-terminus, the 314-residue chain is Methionyl-tRNA formyltransferase (314 aa).

Position 112 to 115 (112 to 115 (SLLP)) interacts with (6S)-5,6,7,8-tetrahydrofolate.

This sequence belongs to the Fmt family.

The enzyme catalyses L-methionyl-tRNA(fMet) + (6R)-10-formyltetrahydrofolate = N-formyl-L-methionyl-tRNA(fMet) + (6S)-5,6,7,8-tetrahydrofolate + H(+). Its function is as follows. Attaches a formyl group to the free amino group of methionyl-tRNA(fMet). The formyl group appears to play a dual role in the initiator identity of N-formylmethionyl-tRNA by promoting its recognition by IF2 and preventing the misappropriation of this tRNA by the elongation apparatus. This is Methionyl-tRNA formyltransferase from Legionella pneumophila subsp. pneumophila (strain Philadelphia 1 / ATCC 33152 / DSM 7513).